Reading from the N-terminus, the 528-residue chain is Cytochrome P450 monooxygenase polB (528 aa).

Residues 3–23 form a helical membrane-spanning segment; the sequence is SFFLVCPVAFLGFTICYLVYV. Residue cysteine 473 coordinates heme.

This sequence belongs to the cytochrome P450 family. Requires heme as cofactor.

It is found in the membrane. It catalyses the reaction 4beta-carboxyl motiol + reduced [NADPH--hemoprotein reductase] + O2 = 2alpha-hydroxyl, 4beta-carboxyl motiol + oxidized [NADPH--hemoprotein reductase] + H2O + H(+). It carries out the reaction 2-deoxypolytolypin + reduced [NADPH--hemoprotein reductase] + O2 = polytolypin + oxidized [NADPH--hemoprotein reductase] + H2O + H(+). The protein operates within secondary metabolite biosynthesis; terpenoid biosynthesis. In terms of biological role, cytochrome P450 monooxygenase; part of the gene cluster that mediates the biosynthesis of antifungal fernane-type triterpenoid polytolypin. PolB acts as a hydroxylase and installs the 2-alpha-hydroxyl group in polytolypin. Within the pathway, the triterpene cyclase polA first catalyzes the cyclization of 2,3-oxidosqualene to motiol, polC converts the 4-alpha-methyl group of motiol to a carboxyl group, polB is responsible for appending a hydroxyl group at the 2-alpha position and polE is a dual functional P450, which can catalyze the formation of both the 1-beta-hydroxyl group and 10-beta-carboxyl group. This chain is Cytochrome P450 monooxygenase polB, found in Polytolypa hystricis (strain UAMH7299).